We begin with the raw amino-acid sequence, 445 residues long: 6-phosphogluconate dehydrogenase, decarboxylating (445 aa).

Residues 1–4 (AVMG), 22–24 (NRS), 63–65 (VKA), and N91 each bind NADP(+). Substrate contacts are provided by residues N91 and 117–119 (SGG). K172 functions as the Proton acceptor in the catalytic mechanism. 175–176 (HN) serves as a coordination point for substrate. The active-site Proton donor is the E179. 5 residues coordinate substrate: Y180, K249, R276, R434, and H440.

The protein belongs to the 6-phosphogluconate dehydrogenase family. In terms of assembly, homodimer.

The enzyme catalyses 6-phospho-D-gluconate + NADP(+) = D-ribulose 5-phosphate + CO2 + NADPH. The protein operates within carbohydrate degradation; pentose phosphate pathway; D-ribulose 5-phosphate from D-glucose 6-phosphate (oxidative stage): step 3/3. In terms of biological role, catalyzes the oxidative decarboxylation of 6-phosphogluconate to ribulose 5-phosphate and CO(2), with concomitant reduction of NADP to NADPH. This Shigella boydii protein is 6-phosphogluconate dehydrogenase, decarboxylating (gnd).